Consider the following 146-residue polypeptide: Snaclec coagulation factor IX/factor X-binding protein subunit B (146 aa).

The signal sequence occupies residues 1-23 (MGRFIFLSFGLLVVFLSLSGTGA). 3 disulfide bridges follow: Cys25–Cys36, Cys53–Cys142, and Cys119–Cys134. The C-type lectin domain occupies 32–143 (YEGHCYKPFN…CRMEAYFVCE (112 aa)). 2 residues coordinate Ca(2+): Ser64 and Glu70. Glu143 serves as a coordination point for Ca(2+).

Belongs to the snaclec family. Heterodimer with subunit A of IX/X-bp or IX-bp; disulfide-linked. In terms of tissue distribution, expressed by the venom gland.

It is found in the secreted. When linked to subunit A of IX/X-bp, anticoagulant protein which binds to the gamma-carboxyglutamic acid-domain regions of factors IX (F9) and factor X (F10) in the presence of calcium with a 1 to 1 stoichiometry. Functionally, when linked to subunit A of IX-bp, anticoagulant protein which binds to the gamma-carboxyglutamic acid-domain regions of factor IX (but not to factor X) in the presence of calcium with a 1 to 1 stoichiometry. The sequence is that of Snaclec coagulation factor IX/factor X-binding protein subunit B from Gloydius halys (Chinese water mocassin).